We begin with the raw amino-acid sequence, 79 residues long: Small ribosomal subunit protein bS18 (79 aa).

Belongs to the bacterial ribosomal protein bS18 family. In terms of assembly, part of the 30S ribosomal subunit. Forms a tight heterodimer with protein bS6.

Its function is as follows. Binds as a heterodimer with protein bS6 to the central domain of the 16S rRNA, where it helps stabilize the platform of the 30S subunit. The chain is Small ribosomal subunit protein bS18 from Renibacterium salmoninarum (strain ATCC 33209 / DSM 20767 / JCM 11484 / NBRC 15589 / NCIMB 2235).